We begin with the raw amino-acid sequence, 522 residues long: DNA-binding protein Ikaros (522 aa).

2 disordered regions span residues 1 to 48 and 96 to 115; these read MEME…HNNR and AKVNGSHAGGPDSKGPYSSA. C2H2-type zinc fingers lie at residues 125–147, 153–175, 181–203, and 209–232; these read LKCDICGIVCIGPNVLMVHKRSH, FQCTQCGASFTQKGNLLRHIKLH, FKCHLCNYACRRRDALSGHLRTH, and HKCAYCGRSYKQRSSLEEHKERCH. A disordered region spans residues 379–406; that stretch reads KSASSEKDGSPSHSGQDSTDTESNNEEK. 2 C2H2-type zinc fingers span residues 468 to 490 and 496 to 520; these read YRCEHCRILFLDHVMYTIHMGCH and FECNLCGHRSQDRYEFSSHMTRGEH.

Belongs to the Ikaros C2H2-type zinc-finger protein family. In terms of tissue distribution, expression mainly limited to thymus, spleen and pronephros. Very low expression in liver. No expression in testis, brain, eye and muscle.

Its subcellular location is the nucleus. Binds and activates the enhancer (delta-A element) of the CD3-delta gene. Functions in the specification and the maturation of the T-lymphocyte. Also interacts with a critical control element in the TDT (terminal deoxynucleotidyltransferase) promoter as well as with the promoters for other genes expressed during early stages of B- and T-cell development. Function is isoform-specific and is modulated by dominant-negative inactive isoforms. The sequence is that of DNA-binding protein Ikaros (ikzf1) from Oncorhynchus mykiss (Rainbow trout).